The following is a 385-amino-acid chain: Calcium/calmodulin-dependent protein kinase type 1D (385 aa).

One can recognise a Protein kinase domain in the interval 23 to 279 (FEFKETLGTG…CEQAARHPWI (257 aa)). ATP-binding positions include 29-37 (LGTGAFSEV) and Lys-52. Lys-113 is covalently cross-linked (Glycyl lysine isopeptide (Lys-Gly) (interchain with G-Cter in SUMO2)). Ser-122 carries the post-translational modification Phosphoserine. Catalysis depends on Asp-144, which acts as the Proton acceptor. Thr-180 is subject to Phosphothreonine; by CaMKK1 and CaMKK2. The tract at residues 279–319 (IAGDTALSKNIHESVSAQIRKNFAKSKWRQAFNATAVVRHM) is autoinhibitory domain. Positions 299–320 (KNFAKSKWRQAFNATAVVRHMR) are calmodulin-binding. The short motif at 318-324 (HMRRLQL) is the Nuclear export signal element. The segment at 363–385 (VAGVGAERRPRPTTVTTGHTGSK) is disordered. Residues 375-385 (TTVTTGHTGSK) are compositionally biased toward polar residues.

Belongs to the protein kinase superfamily. CAMK Ser/Thr protein kinase family. CaMK subfamily. Expressed ubiquitously with high levels in brain and low levels in kidney. Isoform 2 is highly expressed in brain compared to other tissues. In hematopoietic cell lines predominant expression was detected in T and EC cells.

It localises to the cytoplasm. Its subcellular location is the nucleus. It carries out the reaction L-seryl-[protein] + ATP = O-phospho-L-seryl-[protein] + ADP + H(+). The enzyme catalyses L-threonyl-[protein] + ATP = O-phospho-L-threonyl-[protein] + ADP + H(+). Its activity is regulated as follows. Activated by Ca(2+)/calmodulin. Binding of calmodulin results in conformational change that relieves intrasteric autoinhibition and allows phosphorylation of Thr-180 within the activation loop by CaMKK1 or CaMKK2. Phosphorylation of Thr-180 results in several fold increase in total activity. Unlike CaMK4, may be unable to exhibit autonomous activity after Ca(2+)/calmodulin activation. In terms of biological role, calcium/calmodulin-dependent protein kinase that operates in the calcium-triggered CaMKK-CaMK1 signaling cascade and, upon calcium influx, activates CREB-dependent gene transcription, regulates calcium-mediated granulocyte function and respiratory burst and promotes basal dendritic growth of hippocampal neurons. In neutrophil cells, required for cytokine-induced proliferative responses and activation of the respiratory burst. Activates the transcription factor CREB1 in hippocampal neuron nuclei. May play a role in apoptosis of erythroleukemia cells. In vitro, phosphorylates transcription factor CREM isoform Beta. Isoform 1 but not isoform 2 activates CREB1. This Mus musculus (Mouse) protein is Calcium/calmodulin-dependent protein kinase type 1D (Camk1d).